The following is a 247-amino-acid chain: Carboxy-S-adenosyl-L-methionine synthase (247 aa).

Residues tyrosine 39, 64 to 66, 89 to 90, 117 to 118, asparagine 132, and arginine 199 contribute to the S-adenosyl-L-methionine site; these read GCS, DN, and DI.

Belongs to the class I-like SAM-binding methyltransferase superfamily. Cx-SAM synthase family. Homodimer.

It catalyses the reaction prephenate + S-adenosyl-L-methionine = carboxy-S-adenosyl-L-methionine + 3-phenylpyruvate + H2O. Catalyzes the conversion of S-adenosyl-L-methionine (SAM) to carboxy-S-adenosyl-L-methionine (Cx-SAM). The polypeptide is Carboxy-S-adenosyl-L-methionine synthase (Escherichia coli O17:K52:H18 (strain UMN026 / ExPEC)).